The following is a 303-amino-acid chain: Formylglycine-generating enzyme (303 aa).

Ca(2+) contacts are provided by Asn-188, Ile-189, Asp-202, Tyr-204, Asn-222, Val-223, Gly-225, and Val-227. Cys-269 and Cys-274 together coordinate Cu(+).

It belongs to the sulfatase-modifying factor family. Requires Cu(+) as cofactor.

The enzyme catalyses L-cysteinyl-[sulfatase] + 2 a thiol + O2 = an organic disulfide + 3-oxo-L-alanyl-[sulfatase] + hydrogen sulfide + H2O + H(+). The protein operates within protein modification; sulfatase oxidation. In terms of biological role, oxidase that catalyzes the conversion of cysteine to 3-oxoalanine on target proteins. 3-oxoalanine modification, which is also named formylglycine (fGly), occurs in the maturation of arylsulfatases and some alkaline phosphatases that use the hydrated form of 3-oxoalanine as a catalytic nucleophile. The protein is Formylglycine-generating enzyme of Thermomonospora curvata (strain ATCC 19995 / DSM 43183 / JCM 3096 / KCTC 9072 / NBRC 15933 / NCIMB 10081 / Henssen B9).